The following is a 333-amino-acid chain: Ribosomal RNA small subunit methyltransferase H (333 aa).

S-adenosyl-L-methionine-binding positions include 42–44 (GGH), Asp-62, Phe-86, Asp-105, and Gln-112.

Belongs to the methyltransferase superfamily. RsmH family.

It is found in the cytoplasm. It catalyses the reaction cytidine(1402) in 16S rRNA + S-adenosyl-L-methionine = N(4)-methylcytidine(1402) in 16S rRNA + S-adenosyl-L-homocysteine + H(+). Specifically methylates the N4 position of cytidine in position 1402 (C1402) of 16S rRNA. The protein is Ribosomal RNA small subunit methyltransferase H of Cupriavidus necator (strain ATCC 17699 / DSM 428 / KCTC 22496 / NCIMB 10442 / H16 / Stanier 337) (Ralstonia eutropha).